The chain runs to 46 residues: Bottromycin D (46 aa).

Residues 10-46 constitute a propeptide that is removed on maturation; it reads MTADFLNDDPNNAELSSLEMEELESWGAWSDDTDQSV.

The precursor peptide is first ribosomally synthesized and then highly tailored by specific enzymes to yield the final natural product. These modifications include several methylations, cyclization and the formation of t-Leu and Thia-beta-Ala residues.

It localises to the secreted. In terms of biological role, bottromycin D is a ribosomally synthesized and post-translationally modified peptide (RiPP) that displays antibiotic activity against methicillin-resistant S.aureus (MRSA). In Streptomyces sp, this protein is Bottromycin D.